We begin with the raw amino-acid sequence, 1632 residues long: Guanine exchange factor for Rac 30 (1632 aa).

In terms of domain architecture, Calponin-homology (CH) spans 16-122; sequence NIQIDSFTSW…VIFLLIQKIK (107 aa). Disordered stretches follow at residues 134–155 and 171–285; these read QGET…TPTK and FSHI…PTTG. Low complexity-rich tracts occupy residues 137–154 and 180–284; these read TTGT…TTPT and QSSS…SPTT. IQ domains are found at residues 388-417 and 432-461; these read DLKK…KYKQ and AYRG…LYRR. The DH domain occupies 460–638; that stretch reads RRNEIVKEIL…KDVAEYVNEK (179 aa). Over residues 775–795 the composition is skewed to low complexity; sequence QINNQNNNQNNNQNNNLNNNN. The segment at 775 to 798 is disordered; that stretch reads QINNQNNNQNNNQNNNLNNNNDDS. Residues 940-1038 form the PH 1 domain; the sequence is DSEFSNVLEK…WISLIRLSIK (99 aa). Low complexity predominate over residues 1138–1156; that stretch reads STSASQSQSQSPSPSPSHS. The tract at residues 1138 to 1161 is disordered; that stretch reads STSASQSQSQSPSPSPSHSINQKQ. One can recognise an Arf-GAP domain in the interval 1271–1389; that stretch reads NSCGDNINND…NNNNNNSQNG (119 aa). A C4-type zinc finger spans residues 1286–1309; sequence CAECGASDPSWVSINYGVVVCLDC. 3 stretches are compositionally biased toward low complexity: residues 1380–1402, 1409–1431, and 1441–1481; these read NNNN…TSTT, STPT…TTQT, and SSPT…TTPT. Residues 1380-1521 form a disordered region; sequence NNNNNNSQNG…SSHAITERKT (142 aa). Residues 1500–1515 show a composition bias toward polar residues; sequence DTSNGKGTWSRGSSHA. Residues 1532–1631 enclose the PH 2 domain; sequence KKEHQGYLFK…WLDVLSSHTT (100 aa).

It is found in the membrane. The protein localises to the cytoplasmic vesicle. The protein resides in the phagosome membrane. Its function is as follows. GTPase-activating protein for Rac involved in streaming and development. The sequence is that of Guanine exchange factor for Rac 30 (gxcDD) from Dictyostelium discoideum (Social amoeba).